The sequence spans 77 residues: Large ribosomal subunit protein uL24 (77 aa).

Residues 42 to 61 form a disordered region; that stretch reads KKHQKPSQTNANGGVVESEG.

This sequence belongs to the universal ribosomal protein uL24 family. As to quaternary structure, part of the 50S ribosomal subunit.

One of two assembly initiator proteins, it binds directly to the 5'-end of the 23S rRNA, where it nucleates assembly of the 50S subunit. In terms of biological role, one of the proteins that surrounds the polypeptide exit tunnel on the outside of the subunit. The chain is Large ribosomal subunit protein uL24 from Lactobacillus helveticus (strain DPC 4571).